The chain runs to 105 residues: Protein yippee-like At4g27740 (105 aa).

One can recognise a Yippee domain in the interval 8-105 (PTYFCRNCEN…IEKLKLTKRY (98 aa)). Positions 12, 15, 68, and 71 each coordinate Zn(2+).

Belongs to the yippee family.

In Arabidopsis thaliana (Mouse-ear cress), this protein is Protein yippee-like At4g27740.